The chain runs to 37 residues: Large ribosomal subunit protein bL36 (37 aa).

Belongs to the bacterial ribosomal protein bL36 family.

The sequence is that of Large ribosomal subunit protein bL36 from Mycobacterium leprae (strain Br4923).